Reading from the N-terminus, the 405-residue chain is Cytoplasmic 60S subunit biogenesis factor ZNF622 (405 aa).

2 U1-type zinc fingers span residues Tyr4–His28 and Thr67–His91. Residues Ala135–Ala230 are disordered. The segment covering Ala194–Lys228 has biased composition (acidic residues).

The protein belongs to the REI1 family. In terms of assembly, homo- and heterodimer. Associates with pre-60S ribosomal particles. As to expression, mainly expressed in the ovary. In terms of tissue distribution, mainly expressed in the testis.

It localises to the cytoplasm. It is found in the nucleus. Functionally, pre-60S-associated cytoplasmic factor involved in the cytoplasmic maturation of the 60S subunit. The sequence is that of Cytoplasmic 60S subunit biogenesis factor ZNF622 (ZNF622) from Gallus gallus (Chicken).